The following is a 402-amino-acid chain: Argininosuccinate synthase (402 aa).

9–17 (AYSGGLDTS) lines the ATP pocket. Y86 is an L-citrulline binding site. G116 is an ATP binding site. L-aspartate contacts are provided by T118, N122, and D123. N122 serves as a coordination point for L-citrulline. L-citrulline contacts are provided by R126, S174, S183, E259, and Y271.

It belongs to the argininosuccinate synthase family. Type 1 subfamily. In terms of assembly, homotetramer.

It is found in the cytoplasm. It carries out the reaction L-citrulline + L-aspartate + ATP = 2-(N(omega)-L-arginino)succinate + AMP + diphosphate + H(+). It functions in the pathway amino-acid biosynthesis; L-arginine biosynthesis; L-arginine from L-ornithine and carbamoyl phosphate: step 2/3. This chain is Argininosuccinate synthase, found in Anoxybacillus flavithermus (strain DSM 21510 / WK1).